A 362-amino-acid chain; its full sequence is Alcohol dehydrogenase 13 (362 aa).

Zn(2+) is bound by residues cysteine 51, histidine 73, cysteine 104, cysteine 107, cysteine 110, cysteine 118, and cysteine 168. Substrate is bound at residue histidine 73. Residues 193–198 (GLGGLG) and 280–282 (VGA) each bind NAD(+).

This sequence belongs to the zinc-containing alcohol dehydrogenase family. Class-III subfamily. Homodimer. Zn(2+) serves as cofactor.

This Catharanthus roseus (Madagascar periwinkle) protein is Alcohol dehydrogenase 13.